Reading from the N-terminus, the 440-residue chain is UDP-N-acetylmuramoylalanine--D-glutamate ligase (440 aa).

113–119 contributes to the ATP binding site; the sequence is GTNGKST.

The protein belongs to the MurCDEF family.

Its subcellular location is the cytoplasm. The enzyme catalyses UDP-N-acetyl-alpha-D-muramoyl-L-alanine + D-glutamate + ATP = UDP-N-acetyl-alpha-D-muramoyl-L-alanyl-D-glutamate + ADP + phosphate + H(+). The protein operates within cell wall biogenesis; peptidoglycan biosynthesis. In terms of biological role, cell wall formation. Catalyzes the addition of glutamate to the nucleotide precursor UDP-N-acetylmuramoyl-L-alanine (UMA). The chain is UDP-N-acetylmuramoylalanine--D-glutamate ligase (murD) from Buchnera aphidicola subsp. Schizaphis graminum (strain Sg).